The primary structure comprises 170 residues: CDP-archaeol synthase (170 aa).

5 consecutive transmembrane segments (helical) span residues 6-26 (LLWA…PVLV), 53-73 (GLIG…FITP), 83-103 (LLLA…GSFF), 114-134 (PAIG…AYPV), and 140-160 (GQII…NYFA).

Belongs to the CDP-archaeol synthase family. The cofactor is Mg(2+).

The protein localises to the cell membrane. The catalysed reaction is 2,3-bis-O-(geranylgeranyl)-sn-glycerol 1-phosphate + CTP + H(+) = CDP-2,3-bis-O-(geranylgeranyl)-sn-glycerol + diphosphate. It functions in the pathway membrane lipid metabolism; glycerophospholipid metabolism. In terms of biological role, catalyzes the formation of CDP-2,3-bis-(O-geranylgeranyl)-sn-glycerol (CDP-archaeol) from 2,3-bis-(O-geranylgeranyl)-sn-glycerol 1-phosphate (DGGGP) and CTP. This reaction is the third ether-bond-formation step in the biosynthesis of archaeal membrane lipids. The polypeptide is CDP-archaeol synthase (Thermococcus onnurineus (strain NA1)).